We begin with the raw amino-acid sequence, 260 residues long: MAHAWGYGPADGPESWAESFPIANGPRQSPIDIVPTQAQHDPSLKHLKLKYDPATTKSILNNGHSFQVDFVDDDNSSTLAGGPITGIYRLRQFHFHWGSSDDKGSEHTIAGTKFPCELHLVHWNTKYPNFGEAASKPDGLAVVGVFLKIGAANPRLQKVLDALDDIKSKGRQTTFANFDPKTLLPASLDYWTYEGSLTTPPLLESVTWIVLKEPISVSPAQMAKFRSLLFSSEGETPCCMVDNYRPPQPLKGRKVRASFK.

Residues 1–31 (MAHAWGYGPADGPESWAESFPIANGPRQSPI) are disordered. Positions 3–259 (HAWGYGPADG…LKGRKVRASF (257 aa)) constitute an Alpha-carbonic anhydrase domain. Histidine 64 serves as the catalytic Proton acceptor. Residues histidine 94, histidine 96, and histidine 119 each coordinate Zn(2+). Residue tyrosine 127 is part of the active site. 198–199 (TT) contributes to the substrate binding site.

Belongs to the alpha-carbonic anhydrase family. Requires Zn(2+) as cofactor.

It catalyses the reaction hydrogencarbonate + H(+) = CO2 + H2O. Reversible hydration of carbon dioxide. This is Carbonic anhydrase (cahz) from Danio rerio (Zebrafish).